The chain runs to 489 residues: Transcription factor TGAL11 (489 aa).

Residues alanine 87 to threonine 99 show a composition bias toward low complexity. The segment at alanine 87–aspartate 181 is disordered. Residues serine 121–aspartate 139 show a composition bias toward polar residues. Positions alanine 148–glutamine 159 are enriched in low complexity. The segment covering histidine 171–aspartate 181 has biased composition (basic and acidic residues). Residues aspartate 181–arginine 225 enclose the bZIP domain. The basic motif stretch occupies residues lysine 183–lysine 203. Residues leucine 209–leucine 223 form a leucine-zipper region. One can recognise a DOG1 domain in the interval alanine 245–arginine 460.

It belongs to the bZIP family.

The protein localises to the nucleus. Functionally, transcriptional regulator involved in defense response. The sequence is that of Transcription factor TGAL11 from Oryza sativa subsp. japonica (Rice).